Here is a 200-residue protein sequence, read N- to C-terminus: UPF0301 protein Veis_1517 (200 aa).

The protein belongs to the UPF0301 (AlgH) family.

In Verminephrobacter eiseniae (strain EF01-2), this protein is UPF0301 protein Veis_1517.